Reading from the N-terminus, the 503-residue chain is Maturase K (503 aa).

Belongs to the intron maturase 2 family. MatK subfamily.

The protein localises to the plastid. It is found in the chloroplast. Its function is as follows. Usually encoded in the trnK tRNA gene intron. Probably assists in splicing its own and other chloroplast group II introns. The protein is Maturase K of Syzygium anisatum (Aniseed myrtle).